The chain runs to 288 residues: Diaminopimelate epimerase (288 aa).

Residues asparagine 17, glutamine 47, and asparagine 67 each coordinate substrate. The active-site Proton donor is the cysteine 76. Substrate-binding positions include 77–78, asparagine 164, asparagine 197, and 215–216; these read GN and ER. Cysteine 224 serves as the catalytic Proton acceptor. 225-226 lines the substrate pocket; sequence GS.

It belongs to the diaminopimelate epimerase family. In terms of assembly, homodimer.

It localises to the cytoplasm. It catalyses the reaction (2S,6S)-2,6-diaminopimelate = meso-2,6-diaminopimelate. The protein operates within amino-acid biosynthesis; L-lysine biosynthesis via DAP pathway; DL-2,6-diaminopimelate from LL-2,6-diaminopimelate: step 1/1. Catalyzes the stereoinversion of LL-2,6-diaminopimelate (L,L-DAP) to meso-diaminopimelate (meso-DAP), a precursor of L-lysine and an essential component of the bacterial peptidoglycan. The chain is Diaminopimelate epimerase from Rhodopseudomonas palustris (strain BisA53).